A 68-amino-acid polypeptide reads, in one-letter code: UPF0253 protein AHA_2115 (68 aa).

This sequence belongs to the UPF0253 family.

This chain is UPF0253 protein AHA_2115, found in Aeromonas hydrophila subsp. hydrophila (strain ATCC 7966 / DSM 30187 / BCRC 13018 / CCUG 14551 / JCM 1027 / KCTC 2358 / NCIMB 9240 / NCTC 8049).